A 103-amino-acid polypeptide reads, in one-letter code: Small ribosomal subunit protein uS10 (103 aa).

The protein belongs to the universal ribosomal protein uS10 family. In terms of assembly, part of the 30S ribosomal subunit.

In terms of biological role, involved in the binding of tRNA to the ribosomes. The chain is Small ribosomal subunit protein uS10 from Alkalilimnicola ehrlichii (strain ATCC BAA-1101 / DSM 17681 / MLHE-1).